Consider the following 135-residue polypeptide: Ribonuclease P protein component (135 aa).

The disordered stretch occupies residues 115–135 (ETEPVSPVSPTSLPQNERGSP). A compositionally biased stretch (polar residues) spans 122–135 (VSPTSLPQNERGSP).

It belongs to the RnpA family. As to quaternary structure, consists of a catalytic RNA component (M1 or rnpB) and a protein subunit.

It carries out the reaction Endonucleolytic cleavage of RNA, removing 5'-extranucleotides from tRNA precursor.. Functionally, RNaseP catalyzes the removal of the 5'-leader sequence from pre-tRNA to produce the mature 5'-terminus. It can also cleave other RNA substrates such as 4.5S RNA. The protein component plays an auxiliary but essential role in vivo by binding to the 5'-leader sequence and broadening the substrate specificity of the ribozyme. This chain is Ribonuclease P protein component, found in Chloroflexus aggregans (strain MD-66 / DSM 9485).